We begin with the raw amino-acid sequence, 336 residues long: Zinc transporter ZIP11 (336 aa).

Helical transmembrane passes span L12–F32, L44–I64, S75–A95, I188–V208, W258–I278, L280–V300, and L316–G336.

Belongs to the ZIP transporter (TC 2.A.5) family.

It is found in the cell membrane. It localises to the nucleus. Its subcellular location is the cytoplasm. The protein localises to the golgi apparatus. Functions as a cellular zinc transporter. In Xenopus tropicalis (Western clawed frog), this protein is Zinc transporter ZIP11 (slc39a11).